The chain runs to 399 residues: 4-hydroxy-3-methylbut-2-enyl diphosphate reductase (399 aa).

Position 66 (C66) interacts with [4Fe-4S] cluster. H96 contacts (2E)-4-hydroxy-3-methylbut-2-enyl diphosphate. Dimethylallyl diphosphate is bound at residue H96. H96 contacts isopentenyl diphosphate. Residue C157 participates in [4Fe-4S] cluster binding. (2E)-4-hydroxy-3-methylbut-2-enyl diphosphate is bound at residue H185. H185 contacts dimethylallyl diphosphate. H185 lines the isopentenyl diphosphate pocket. The active-site Proton donor is the E187. T250 is a binding site for (2E)-4-hydroxy-3-methylbut-2-enyl diphosphate. Residue C288 participates in [4Fe-4S] cluster binding. Residues S317, S318, N319, and S380 each contribute to the (2E)-4-hydroxy-3-methylbut-2-enyl diphosphate site. Residues S317, S318, N319, and S380 each contribute to the dimethylallyl diphosphate site. Isopentenyl diphosphate contacts are provided by S317, S318, N319, and S380.

Belongs to the IspH family. It depends on [4Fe-4S] cluster as a cofactor.

It carries out the reaction isopentenyl diphosphate + 2 oxidized [2Fe-2S]-[ferredoxin] + H2O = (2E)-4-hydroxy-3-methylbut-2-enyl diphosphate + 2 reduced [2Fe-2S]-[ferredoxin] + 2 H(+). It catalyses the reaction dimethylallyl diphosphate + 2 oxidized [2Fe-2S]-[ferredoxin] + H2O = (2E)-4-hydroxy-3-methylbut-2-enyl diphosphate + 2 reduced [2Fe-2S]-[ferredoxin] + 2 H(+). It participates in isoprenoid biosynthesis; dimethylallyl diphosphate biosynthesis; dimethylallyl diphosphate from (2E)-4-hydroxy-3-methylbutenyl diphosphate: step 1/1. Its pathway is isoprenoid biosynthesis; isopentenyl diphosphate biosynthesis via DXP pathway; isopentenyl diphosphate from 1-deoxy-D-xylulose 5-phosphate: step 6/6. Catalyzes the conversion of 1-hydroxy-2-methyl-2-(E)-butenyl 4-diphosphate (HMBPP) into a mixture of isopentenyl diphosphate (IPP) and dimethylallyl diphosphate (DMAPP). Acts in the terminal step of the DOXP/MEP pathway for isoprenoid precursor biosynthesis. The sequence is that of 4-hydroxy-3-methylbut-2-enyl diphosphate reductase from Synechococcus sp. (strain CC9605).